A 324-amino-acid polypeptide reads, in one-letter code: Beta-ketoacyl-[acyl-carrier-protein] synthase III (324 aa).

Residues Cys-114 and His-251 contribute to the active site. The interval 252 to 256 (QANRR) is ACP-binding. Asn-281 is a catalytic residue.

Belongs to the thiolase-like superfamily. FabH family. As to quaternary structure, homodimer.

It is found in the cytoplasm. The enzyme catalyses malonyl-[ACP] + acetyl-CoA + H(+) = 3-oxobutanoyl-[ACP] + CO2 + CoA. Its pathway is lipid metabolism; fatty acid biosynthesis. In terms of biological role, catalyzes the condensation reaction of fatty acid synthesis by the addition to an acyl acceptor of two carbons from malonyl-ACP. Catalyzes the first condensation reaction which initiates fatty acid synthesis and may therefore play a role in governing the total rate of fatty acid production. Possesses both acetoacetyl-ACP synthase and acetyl transacylase activities. Its substrate specificity determines the biosynthesis of branched-chain and/or straight-chain of fatty acids. The chain is Beta-ketoacyl-[acyl-carrier-protein] synthase III from Paramagnetospirillum magneticum (strain ATCC 700264 / AMB-1) (Magnetospirillum magneticum).